The primary structure comprises 703 residues: Protein CNGC15c (703 aa).

The segment covering 1 to 10 (MGFDNPRSER) has biased composition (basic and acidic residues). The segment at 1-23 (MGFDNPRSERFEDDPEISKIPTT) is disordered. 5 consecutive transmembrane segments (helical) span residues 91–111 (IFLV…YLPV), 179–199 (GFWL…WIII), 216–236 (FFII…SSQI), 255–275 (LMLY…LSIE), and 372–392 (FIGE…LFAL). 480 to 565 (LFDQMDERML…WALDPRPSVI (86 aa)) serves as a coordination point for a nucleoside 3',5'-cyclic phosphate. One can recognise an IQ domain in the interval 616–644 (RTWAACFIQAAWRRHKKRKEAAELRAKEN). The tract at residues 676-703 (KGVNMHSGTNSGVVSSLQKPTEPDFSDE) is disordered. The segment covering 681 to 694 (HSGTNSGVVSSLQK) has biased composition (polar residues).

This sequence belongs to the cyclic nucleotide-gated cation channel (TC 1.A.1.5) family. In terms of assembly, interacts (via N-terminus) with DMI1 (via c-terminus). The Nod factor has no effect on this interaction, implying that the complex is maintained after activation. In terms of tissue distribution, expressed in roots, stems, leaves, flowers and pods.

It localises to the nucleus membrane. In terms of biological role, cyclic nucleotide-gated channel involved in the establishment of both rhizobial and mycorrhizal associations. Required for full activation of nuclear-localized Ca(2+) oscillations by Nod and Myc factors. Simultaneous activation of the K(+)-permeable channel DMI1 and the Ca(2+) channel CNGC15 can give rise to sustained Ca(2+) oscillations. May function during fertilization in both female and male gametophytic Ca(2+) signaling. The chain is Protein CNGC15c from Medicago truncatula (Barrel medic).